The primary structure comprises 503 residues: Aromatase (503 aa).

2 residues coordinate substrate: D309 and M374. C437 contributes to the heme binding site.

This sequence belongs to the cytochrome P450 family. Heme is required as a cofactor.

It localises to the membrane. The enzyme catalyses testosterone + 3 reduced [NADPH--hemoprotein reductase] + 3 O2 = 17beta-estradiol + formate + 3 oxidized [NADPH--hemoprotein reductase] + 4 H2O + 4 H(+). The catalysed reaction is androst-4-ene-3,17-dione + 3 reduced [NADPH--hemoprotein reductase] + 3 O2 = estrone + formate + 3 oxidized [NADPH--hemoprotein reductase] + 4 H2O + 4 H(+). Its function is as follows. Catalyzes the formation of aromatic C18 estrogens from C19 androgens. The polypeptide is Aromatase (CYP19A1) (Callithrix jacchus (White-tufted-ear marmoset)).